Reading from the N-terminus, the 346-residue chain is 3-keto-steroid reductase (346 aa).

Leu20, Thr43, and Lys49 together coordinate NADP(+). Residues Ser182 and Tyr205 each act as proton donor in the active site. The NADP(+) site is built by Tyr205, Lys209, and Ser241. Residue Lys209 is the Lowers pKa of active site Tyr of the active site.

Belongs to the short-chain dehydrogenases/reductases (SDR) family. ERG27 subfamily.

It catalyses the reaction a 3beta-hydroxysteroid + NADP(+) = a 3-oxosteroid + NADPH + H(+). It participates in steroid biosynthesis; zymosterol biosynthesis; zymosterol from lanosterol: step 5/6. Its function is as follows. Responsible for the reduction of the keto group on the C-3 of sterols. This is 3-keto-steroid reductase (ERG27) from Debaryomyces hansenii (strain ATCC 36239 / CBS 767 / BCRC 21394 / JCM 1990 / NBRC 0083 / IGC 2968) (Yeast).